Consider the following 358-residue polypeptide: Probable BOI-related E3 ubiquitin-protein ligase 2 (358 aa).

The stretch at 171–234 (KYEIEEKRKR…NQIWRDLAQT (64 aa)) forms a coiled coil. Residues 214–250 (LEERVKSLSIENQIWRDLAQTNEATANHLRTNLEHVL) form a WRD domain region. An RING-type zinc finger spans residues 310-345 (CRNCGEEESCVLLLPCRHLCLCGVCGSSVHTCPICT).

In terms of assembly, interacts with the DELLA proteins GAI, RGA, RGL1, RGL2 and RGL3.

The catalysed reaction is S-ubiquitinyl-[E2 ubiquitin-conjugating enzyme]-L-cysteine + [acceptor protein]-L-lysine = [E2 ubiquitin-conjugating enzyme]-L-cysteine + N(6)-ubiquitinyl-[acceptor protein]-L-lysine.. It functions in the pathway protein degradation; proteasomal ubiquitin-dependent pathway. Probable E3 ubiquitin-protein ligase. Has no effect on the stability of the DELLA proteins. In Arabidopsis thaliana (Mouse-ear cress), this protein is Probable BOI-related E3 ubiquitin-protein ligase 2 (BRG2).